Consider the following 465-residue polypeptide: UDP-glycosyltransferase 89A2 (465 aa).

UDP-alpha-D-glucose is bound by residues Ser291, 342–344 (VSQ), 359–367 (HCGWNSVLE), and 381–384 (EADQ).

This sequence belongs to the UDP-glycosyltransferase family.

Functionally, glucosyltransferase that glucosylates benzoates and benzoate derivatives in vitro. This is UDP-glycosyltransferase 89A2 (UGT89A2) from Arabidopsis thaliana (Mouse-ear cress).